The chain runs to 185 residues: Transposon Tn3 resolvase (185 aa).

One can recognise a Resolvase/invertase-type recombinase catalytic domain in the interval 2-137; it reads RIFGYARVST…EGRQEAKLKG (136 aa). The O-(5'-phospho-DNA)-serine intermediate role is filled by Ser10. The segment at residues 161-180 is a DNA-binding region (H-T-H motif); that stretch reads ATEIAHQLSIARSTVYKILE.

The protein belongs to the site-specific recombinase resolvase family.

Resolvase catalyzes the resolution (a site-specific recombination) of the cointegrated replicon to yield the final transposition products. This chain is Transposon Tn3 resolvase (tnpR), found in Escherichia coli.